The sequence spans 146 residues: Large ribosomal subunit protein eL32 (146 aa).

It belongs to the eukaryotic ribosomal protein eL32 family.

This is Large ribosomal subunit protein eL32 (rpl32e) from Methanocaldococcus jannaschii (strain ATCC 43067 / DSM 2661 / JAL-1 / JCM 10045 / NBRC 100440) (Methanococcus jannaschii).